The primary structure comprises 219 residues: Octanoyltransferase (219 aa).

The BPL/LPL catalytic domain maps to 31–206 (DEDVDQIWLV…ELVELLGYDQ (176 aa)). Residues 70 to 77 (RGGQVTYH), 137 to 139 (SLG), and 150 to 152 (GLA) each bind substrate. C168 acts as the Acyl-thioester intermediate in catalysis.

It belongs to the LipB family.

The protein resides in the cytoplasm. It catalyses the reaction octanoyl-[ACP] + L-lysyl-[protein] = N(6)-octanoyl-L-lysyl-[protein] + holo-[ACP] + H(+). It functions in the pathway protein modification; protein lipoylation via endogenous pathway; protein N(6)-(lipoyl)lysine from octanoyl-[acyl-carrier-protein]: step 1/2. Its function is as follows. Catalyzes the transfer of endogenously produced octanoic acid from octanoyl-acyl-carrier-protein onto the lipoyl domains of lipoate-dependent enzymes. Lipoyl-ACP can also act as a substrate although octanoyl-ACP is likely to be the physiological substrate. This is Octanoyltransferase from Vibrio atlanticus (strain LGP32) (Vibrio splendidus (strain Mel32)).